The chain runs to 482 residues: ATP synthase subunit beta (482 aa).

162–169 (GGAGVGKT) contacts ATP.

It belongs to the ATPase alpha/beta chains family. In terms of assembly, F-type ATPases have 2 components, CF(1) - the catalytic core - and CF(0) - the membrane proton channel. CF(1) has five subunits: alpha(3), beta(3), gamma(1), delta(1), epsilon(1). CF(0) has four main subunits: a(1), b(1), b'(1) and c(9-12).

It is found in the cellular thylakoid membrane. The enzyme catalyses ATP + H2O + 4 H(+)(in) = ADP + phosphate + 5 H(+)(out). Produces ATP from ADP in the presence of a proton gradient across the membrane. The catalytic sites are hosted primarily by the beta subunits. This Nostoc sp. (strain PCC 7120 / SAG 25.82 / UTEX 2576) protein is ATP synthase subunit beta.